We begin with the raw amino-acid sequence, 424 residues long: UPF0597 protein Shewana3_2972 (424 aa).

This sequence belongs to the UPF0597 family.

In Shewanella sp. (strain ANA-3), this protein is UPF0597 protein Shewana3_2972.